A 197-amino-acid chain; its full sequence is ATP-dependent Clp protease proteolytic subunit 1 (197 aa).

The Nucleophile role is filled by Ser100. Residue His125 is part of the active site.

The protein belongs to the peptidase S14 family. Fourteen ClpP subunits assemble into 2 heptameric rings which stack back to back to give a disk-like structure with a central cavity, resembling the structure of eukaryotic proteasomes.

The protein localises to the cytoplasm. The catalysed reaction is Hydrolysis of proteins to small peptides in the presence of ATP and magnesium. alpha-casein is the usual test substrate. In the absence of ATP, only oligopeptides shorter than five residues are hydrolyzed (such as succinyl-Leu-Tyr-|-NHMec, and Leu-Tyr-Leu-|-Tyr-Trp, in which cleavage of the -Tyr-|-Leu- and -Tyr-|-Trp bonds also occurs).. In terms of biological role, cleaves peptides in various proteins in a process that requires ATP hydrolysis. Has a chymotrypsin-like activity. Plays a major role in the degradation of misfolded proteins. The chain is ATP-dependent Clp protease proteolytic subunit 1 from Gloeobacter violaceus (strain ATCC 29082 / PCC 7421).